Here is a 1064-residue protein sequence, read N- to C-terminus: Lysine-specific demethylase 4A (1064 aa).

Alanine 2 is subject to N-acetylalanine. Positions 14 to 56 constitute a JmjN domain; that stretch reads IMTFYPTMEEFRNFSRYIAYIESQGAHRAGLAKVVPPKEWKPR. Tyrosine 132 is a 2-oxoglutarate binding site. Positions 142–308 constitute a JmjC domain; sequence EQHVDEWNIG…YGKQAVLCSC (167 aa). Positions 188 and 190 each coordinate Fe cation. Residues asparagine 198 and lysine 206 each contribute to the 2-oxoglutarate site. Cysteine 234 and histidine 240 together coordinate Zn(2+). Residue lysine 241 participates in 2-oxoglutarate binding. Histidine 276 is a Fe cation binding site. Zn(2+) is bound by residues cysteine 306 and cysteine 308. Disordered stretches follow at residues 354–384, 434–489, 502–537, 549–573, and 590–643; these read LKDSGGLTPRAGSEECPEEDVEAADQGEEGD, LAPV…LDLS, SGSKKKSSSSLGSTSSQDSVSSDSETAESVSCQGQE, RGDGKAATGEPSVKKKRSAPRSISE, and NKKT…LSQL. Acidic residues predominate over residues 368 to 382; sequence ECPEEDVEAADQGEE. The segment covering 460 to 472 has biased composition (basic and acidic residues); sequence TEVKFEELKNVKL. Residues 473-482 show a composition bias toward acidic residues; that stretch reads EEEDEEDEPE. A compositionally biased stretch (low complexity) spans 509–525; sequence SSSLGSTSSQDSVSSDS. Position 523 is a phosphoserine (serine 523). The segment covering 528–537 has biased composition (polar residues); sequence AESVSCQGQE. The segment covering 593–608 has biased composition (basic residues); the sequence is TKGRRQPLSKLPRHHP. Positions 597-638 are interaction with NCOR1; that stretch reads RQPLSKLPRHHPLVLQECGSDDETSEQLTPEEEAEETEAWAK. Over residues 615-634 the composition is skewed to acidic residues; the sequence is GSDDETSEQLTPEEEAEETE. Residues 709 to 767 form a PHD-type 1 zinc finger; the sequence is MCFTTTGCSTDINLSTPYLEEDGTSMLVSCKKCSVRVHASCYGVPPAKASEEWMCSRCS. Residues 772-805 form a C2HC pre-PHD-type zinc finger; the sequence is EEDCCLCSLRGGALQRANDDRWVHVSCAVAILEA. The PHD-type 2 zinc-finger motif lies at 828 to 885; that stretch reads LKCVFCKKRRKRNAGCCVQCSHGRCPTAFHVSCAQAAGVMMQPDDWPFVVFITCFRHK. 2 consecutive Tudor domains span residues 897–954 and 955–1011; these read LSIT…CLQL and GPPA…EELP.

It belongs to the JHDM3 histone demethylase family. Interacts with histone deacetylase proteins HDAC1, HDAC2 and HDAC3. Interacts with RB and NCOR1. Interacts with VRK1. It depends on Fe(2+) as a cofactor. Post-translationally, ubiquitinated by RNF8 and RNF168, leading to its degradation. Degradation promotes accessibility of H4K20me2 mark for DNA repair protein TP53BP1, which is then recruited. Also ubiquitinated by the SCF(FBXO22) complex; leading to proteasomal degradation. Widely expressed.

The protein resides in the nucleus. It catalyses the reaction N(6),N(6),N(6)-trimethyl-L-lysyl(9)-[histone H3] + 2 2-oxoglutarate + 2 O2 = N(6)-methyl-L-lysyl(9)-[histone H3] + 2 formaldehyde + 2 succinate + 2 CO2. It carries out the reaction N(6),N(6),N(6)-trimethyl-L-lysyl(36)-[histone H3] + 2 2-oxoglutarate + 2 O2 = N(6)-methyl-L-lysyl(36)-[histone H3] + 2 formaldehyde + 2 succinate + 2 CO2. Histone demethylase that specifically demethylates 'Lys-9' and 'Lys-36' residues of histone H3, thereby playing a central role in histone code. Does not demethylate histone H3 'Lys-4', H3 'Lys-27' nor H4 'Lys-20'. Demethylates trimethylated H3 'Lys-9' and H3 'Lys-36' residue, while it has no activity on mono- and dimethylated residues. Demethylation of Lys residue generates formaldehyde and succinate. Participates in transcriptional repression of ASCL2 and E2F-responsive promoters via the recruitment of histone deacetylases and NCOR1, respectively. This chain is Lysine-specific demethylase 4A (Kdm4a), found in Mus musculus (Mouse).